Consider the following 445-residue polypeptide: RCC1 domain-containing protein RUG3, mitochondrial (445 aa).

A mitochondrion-targeting transit peptide spans 1–22; it reads MAALSHRLRSFTRRFSSTRTTQ. RCC1 repeat units lie at residues 47 to 101, 118 to 169, 171 to 221, 222 to 279, 280 to 331, 333 to 383, and 385 to 442; these read TLQL…DSSS, DGDL…ALTH, GDVF…AITE, SGEL…ALTK, EGQL…ALTE, GKVL…AITD, and GELW…CLVS.

As to quaternary structure, interacts with ATM. As to expression, mostly expressed in roots and rosette leaves of young seedlings, and, to a lower extent, in the flowers and siliques of mature plants. Preferentially expressed in the vascular tissues.

The protein localises to the mitochondrion. Its function is as follows. Regulates DNA damage response (DDR) synergistically with ATM. Together with ATM, involved in the splicing of the ND2/NAD2 mRNA. Required for the accumulation of mitochondrial respiratory chain complex I. Negative regulator of plant responses to abscisic acid (ABA). May have a pivotal role in vegetative growth and the phase transition from vegetative to reproductive growth. The protein is RCC1 domain-containing protein RUG3, mitochondrial of Arabidopsis thaliana (Mouse-ear cress).